The sequence spans 236 residues: tRNA1(Val) (adenine(37)-N6)-methyltransferase (236 aa).

It belongs to the methyltransferase superfamily. tRNA (adenine-N(6)-)-methyltransferase family.

It localises to the cytoplasm. The enzyme catalyses adenosine(37) in tRNA1(Val) + S-adenosyl-L-methionine = N(6)-methyladenosine(37) in tRNA1(Val) + S-adenosyl-L-homocysteine + H(+). Functionally, specifically methylates the adenine in position 37 of tRNA(1)(Val) (anticodon cmo5UAC). This chain is tRNA1(Val) (adenine(37)-N6)-methyltransferase, found in Shewanella sp. (strain MR-4).